A 285-amino-acid polypeptide reads, in one-letter code: MELWPGAWTALLLLLLLLLSTLWFCSSSAKYFFKMAFYNGWILFLAILAIPVCAVRGRNVENMKILRLLLLHAKYLYGIRVEVRGAHHFPPTQPYVVVSNHQSSLDLLGMMEVLPDRCVPIAKRELLWAGSAGLACWLAGIIFIDRKRTGDAISVMSEVAQTLLTQDVRVWVFPEGTRNHNGSMLPFKRGAFHLAVQAQVPIIPIVMSSYQDFYSKKERRFTSPGRCQVRVLPPVSTEGLTPDDVPALADSVRHSMLTIFREISTDGLGGGDCLKKPGGAGEARL.

The signal sequence occupies residues 1-28 (MELWPGAWTALLLLLLLLLSTLWFCSSS). The Lumenal portion of the chain corresponds to 29-34 (AKYFFK). A helical membrane pass occupies residues 35-55 (MAFYNGWILFLAILAIPVCAV). The Cytoplasmic segment spans residues 56-124 (RGRNVENMKI…PDRCVPIAKR (69 aa)). Positions 101–106 (HQSSLD) match the HXXXXD motif motif. A helical membrane pass occupies residues 125 to 145 (ELLWAGSAGLACWLAGIIFID). Over 146 to 189 (RKRTGDAISVMSEVAQTLLTQDVRVWVFPEGTRNHNGSMLPFKR) the chain is Lumenal. The EGTR motif motif lies at 175-178 (EGTR).

Belongs to the 1-acyl-sn-glycerol-3-phosphate acyltransferase family. As to expression, widely expressed.

The protein resides in the endoplasmic reticulum membrane. It catalyses the reaction a 1-acyl-sn-glycero-3-phosphate + an acyl-CoA = a 1,2-diacyl-sn-glycero-3-phosphate + CoA. The catalysed reaction is 1-(9Z-octadecenoyl)-sn-glycero-3-phosphate + (9Z)-octadecenoyl-CoA = 1,2-di-(9Z-octadecenoyl)-sn-glycero-3-phosphate + CoA. It carries out the reaction 1-(9Z-octadecenoyl)-sn-glycero-3-phosphate + hexadecanoyl-CoA = 1-(9Z)-octadecenoyl-2-hexadecanoyl-sn-glycero-3-phosphate + CoA. The enzyme catalyses heptadecanoyl-CoA + 1-(9Z-octadecenoyl)-sn-glycero-3-phosphate = 1-(9Z)-octadecenoyl-2-heptadecanoyl-sn-glycero-3-phosphate + CoA. It catalyses the reaction 1-(9Z-octadecenoyl)-sn-glycero-3-phosphate + octadecanoyl-CoA = 1-(9Z-octadecenoyl)-2-octadecanoyl-sn-glycero-3-phosphate + CoA. The catalysed reaction is 1-(9Z-octadecenoyl)-sn-glycero-3-phosphate + (9Z,12Z)-octadecadienoyl-CoA = 1-(9Z)-octadecenoyl-2-(9Z,12Z)-octadecadienoyl-sn-glycero-3-phosphate + CoA. It carries out the reaction 1-(9Z-octadecenoyl)-sn-glycero-3-phosphate + tetradecanoyl-CoA = 1-(9Z)-octadecenoyl-2-tetradecanoyl-sn-glycero-3-phosphate + CoA. The enzyme catalyses pentadecanoyl-CoA + 1-(9Z-octadecenoyl)-sn-glycero-3-phosphate = 1-(9Z)-octadecenoyl-2-pentadecanoyl-sn-glycero-3-phosphate + CoA. It catalyses the reaction 1-hexadecanoyl-sn-glycero-3-phosphate + (9Z)-octadecenoyl-CoA = 1-hexadecanoyl-2-(9Z-octadecenoyl)-sn-glycero-3-phosphate + CoA. The catalysed reaction is 1-(9Z,12Z,15Z)-octadecatrienoyl-sn-glycero-3-phosphate + (9Z)-octadecenoyl-CoA = 1-(9Z,12Z,15Z)-octadecatrienoyl-2-(9Z)-octadecenoyl-sn-glycero-3-phosphate + CoA. It carries out the reaction 1-(6Z,9Z,12Z-octadecatrienoyl)-sn-glycero-3-phosphate + (9Z)-octadecenoyl-CoA = (6Z,9Z,12Z)-octadecatrienoyl-2-(9Z)-octadecenoyl-sn-glycero-3-phosphate + CoA. The enzyme catalyses 1-eicosanoyl-sn-glycero-3-phosphate + (9Z)-octadecenoyl-CoA = 1-eicosanoyl-2-(9Z)-octadecenoyl-sn-glycero-3-phosphate + CoA. It catalyses the reaction 1-tetradecanoyl-sn-glycerol 3-phosphate + (9Z)-octadecenoyl-CoA = 1-tetradecanoyl-2-(9Z)-octadecenoyl-sn-glycero-3-phosphate + CoA. The catalysed reaction is 1-(9Z-octadecenoyl)-sn-glycero-3-phosphate + (5Z,8Z,11Z,14Z)-eicosatetraenoyl-CoA = 1-(9Z)-octadecenoyl-2-(5Z,8Z,11Z,14Z)-eicosatetraenoyl-sn-glycero-3-phosphate + CoA. It carries out the reaction 1-(9Z-octadecenoyl)-sn-glycero-3-phosphate + dodecanoyl-CoA = 1-(9Z)-octadecenoyl-2-dodecanoyl-sn-glycero-3-phosphate + CoA. The enzyme catalyses (6Z)-octadecenoyl-CoA + 1-(9Z-octadecenoyl)-sn-glycero-3-phosphate = 1-(9Z)-octadecenoyl-2-(6Z)-octadecenoyl-sn-glycero-3-phosphate + CoA. It catalyses the reaction (11Z)-octadecenoyl-CoA + 1-(9Z-octadecenoyl)-sn-glycero-3-phosphate = 1-(9Z)-octadecenoyl-2-(11Z)-octadecenoyl-sn-glycero-3-phosphate + CoA. The catalysed reaction is (9Z)-hexadecenoyl-CoA + 1-(9Z-octadecenoyl)-sn-glycero-3-phosphate = 1-(9Z-octadecenoyl)-2-(9Z-hexadecenoyl)-sn-glycero-3-phosphate + CoA. The protein operates within phospholipid metabolism; CDP-diacylglycerol biosynthesis; CDP-diacylglycerol from sn-glycerol 3-phosphate: step 2/3. In terms of biological role, converts 1-acyl-sn-glycerol-3-phosphate (lysophosphatidic acid or LPA) into 1,2-diacyl-sn-glycerol-3-phosphate (phosphatidic acid or PA) by incorporating an acyl moiety at the sn-2 position of the glycerol backbone. The protein is 1-acyl-sn-glycerol-3-phosphate acyltransferase alpha (Agpat1) of Mus musculus (Mouse).